Here is a 431-residue protein sequence, read N- to C-terminus: GTPase Obg (431 aa).

The Obg domain maps to Met1–Leu158. Residues Lys118–Glu144 are disordered. The OBG-type G domain maps to Ala159–Glu330. Residues Gly165–Ser172, Phe190–Lys194, Asp212–Gly215, Asn282–Asp285, and Ser311–Phe313 contribute to the GTP site. 2 residues coordinate Mg(2+): Ser172 and Thr192. The region spanning Lys353 to Glu431 is the OCT domain.

It belongs to the TRAFAC class OBG-HflX-like GTPase superfamily. OBG GTPase family. Monomer. Requires Mg(2+) as cofactor.

Its subcellular location is the cytoplasm. Its function is as follows. An essential GTPase which binds GTP, GDP and possibly (p)ppGpp with moderate affinity, with high nucleotide exchange rates and a fairly low GTP hydrolysis rate. Plays a role in control of the cell cycle, stress response, ribosome biogenesis and in those bacteria that undergo differentiation, in morphogenesis control. The protein is GTPase Obg of Staphylococcus saprophyticus subsp. saprophyticus (strain ATCC 15305 / DSM 20229 / NCIMB 8711 / NCTC 7292 / S-41).